The chain runs to 458 residues: Ribulose bisphosphate carboxylase (458 aa).

Asn-111 is a substrate binding site. The Proton acceptor role is filled by Lys-166. Lys-168 serves as a coordination point for substrate. Mg(2+)-binding residues include Lys-191, Asp-193, and Glu-194. The residue at position 191 (Lys-191) is an N6-carboxylysine. Catalysis depends on His-287, which acts as the Proton acceptor. Substrate-binding residues include Arg-288, His-321, and Ser-368.

The protein belongs to the RuBisCO large chain family. Type II subfamily. As to quaternary structure, homodimer. It depends on Mg(2+) as a cofactor.

The catalysed reaction is 2 (2R)-3-phosphoglycerate + 2 H(+) = D-ribulose 1,5-bisphosphate + CO2 + H2O. It catalyses the reaction D-ribulose 1,5-bisphosphate + O2 = 2-phosphoglycolate + (2R)-3-phosphoglycerate + 2 H(+). In terms of biological role, ruBisCO catalyzes two reactions: the carboxylation of D-ribulose 1,5-bisphosphate, the primary event in carbon dioxide fixation, as well as the oxidative fragmentation of the pentose substrate. Both reactions occur simultaneously and in competition at the same active site. This Rhodobacter capsulatus (Rhodopseudomonas capsulata) protein is Ribulose bisphosphate carboxylase (cbbM).